A 147-amino-acid polypeptide reads, in one-letter code: 3-dehydroquinate dehydratase (147 aa).

Y24 functions as the Proton acceptor in the catalytic mechanism. Substrate contacts are provided by N75, H81, and D88. Residue H101 is the Proton donor of the active site. Substrate is bound by residues 102-103 and R112; that span reads IS.

The protein belongs to the type-II 3-dehydroquinase family. In terms of assembly, homododecamer.

It carries out the reaction 3-dehydroquinate = 3-dehydroshikimate + H2O. The protein operates within metabolic intermediate biosynthesis; chorismate biosynthesis; chorismate from D-erythrose 4-phosphate and phosphoenolpyruvate: step 3/7. Functionally, catalyzes a trans-dehydration via an enolate intermediate. The polypeptide is 3-dehydroquinate dehydratase (Cereibacter sphaeroides (strain ATCC 17023 / DSM 158 / JCM 6121 / CCUG 31486 / LMG 2827 / NBRC 12203 / NCIMB 8253 / ATH 2.4.1.) (Rhodobacter sphaeroides)).